The following is a 95-amino-acid chain: Ribosome-binding factor A (95 aa).

The protein belongs to the RbfA family. Interacts with the 30S ribosomal subunit as a monomer, binding in a position overlapping the sites of the A and P site tRNAs, and displacing segments of the 16S rRNA. Probably contacts 16S rRNA and ribosomal protein S9 and S13.

The protein localises to the cytoplasm. One of several proteins that assist in the late maturation steps of the functional core of the 30S ribosomal subunit. Associates with free 30S ribosomal subunits (but not with 30S subunits that are part of 70S ribosomes or polysomes). Required for efficient processing of 16S rRNA. Probably interacts with the 5'-terminal helix region of 16S rRNA, bringing together different domains of the 30S ribosomal subunit which aids assembly. The sequence is that of Ribosome-binding factor A from Thermus thermophilus (strain ATCC 27634 / DSM 579 / HB8).